An 812-amino-acid chain; its full sequence is DNA gyrase subunit A (812 aa).

A Topo IIA-type catalytic domain is found at 31–496 (IPDVRDGLKP…GNTDFNVEDV (466 aa)). Y119 functions as the O-(5'-phospho-DNA)-tyrosine intermediate in the catalytic mechanism. Residues 523 to 529 (QGRGGKG) carry the GyrA-box motif.

It belongs to the type II topoisomerase GyrA/ParC subunit family. Heterotetramer, composed of two GyrA and two GyrB chains. In the heterotetramer, GyrA contains the active site tyrosine that forms a transient covalent intermediate with DNA, while GyrB binds cofactors and catalyzes ATP hydrolysis.

It is found in the cytoplasm. The catalysed reaction is ATP-dependent breakage, passage and rejoining of double-stranded DNA.. Functionally, a type II topoisomerase that negatively supercoils closed circular double-stranded (ds) DNA in an ATP-dependent manner to modulate DNA topology and maintain chromosomes in an underwound state. Negative supercoiling favors strand separation, and DNA replication, transcription, recombination and repair, all of which involve strand separation. Also able to catalyze the interconversion of other topological isomers of dsDNA rings, including catenanes and knotted rings. Type II topoisomerases break and join 2 DNA strands simultaneously in an ATP-dependent manner. This chain is DNA gyrase subunit A, found in Kosmotoga olearia (strain ATCC BAA-1733 / DSM 21960 / TBF 19.5.1).